A 312-amino-acid chain; its full sequence is Glyoxylate/hydroxypyruvate reductase A (312 aa).

R227 is an active-site residue. H275 acts as the Proton donor in catalysis.

It belongs to the D-isomer specific 2-hydroxyacid dehydrogenase family. GhrA subfamily.

Its subcellular location is the cytoplasm. It catalyses the reaction glycolate + NADP(+) = glyoxylate + NADPH + H(+). The catalysed reaction is (R)-glycerate + NAD(+) = 3-hydroxypyruvate + NADH + H(+). The enzyme catalyses (R)-glycerate + NADP(+) = 3-hydroxypyruvate + NADPH + H(+). In terms of biological role, catalyzes the NADPH-dependent reduction of glyoxylate and hydroxypyruvate into glycolate and glycerate, respectively. The polypeptide is Glyoxylate/hydroxypyruvate reductase A (Shigella dysenteriae serotype 1 (strain Sd197)).